A 267-amino-acid chain; its full sequence is V-type proton ATPase subunit D (267 aa).

This sequence belongs to the V-ATPase D subunit family. V-ATPase is a heteromultimeric enzyme composed of a peripheral catalytic V1 complex (components A to H) attached to an integral membrane V0 proton pore complex (components: a, c, c', c'', d, e, f and VOA1).

It localises to the vacuole membrane. Functionally, subunit of the V1 complex of vacuolar(H+)-ATPase (V-ATPase), a multisubunit enzyme composed of a peripheral complex (V1) that hydrolyzes ATP and a membrane integral complex (V0) that translocates protons. V-ATPase is responsible for acidifying and maintaining the pH of intracellular compartments. The sequence is that of V-type proton ATPase subunit D (VMA8) from Candida albicans (strain SC5314 / ATCC MYA-2876) (Yeast).